A 508-amino-acid polypeptide reads, in one-letter code: ATP synthase subunit alpha, chloroplastic (508 aa).

170–177 (GDRQTGKT) is a binding site for ATP.

Belongs to the ATPase alpha/beta chains family. As to quaternary structure, F-type ATPases have 2 components, F(1) - the catalytic core - and F(0) - the membrane proton channel. F(1) has five subunits: alpha(3), beta(3), gamma(1), delta(1), epsilon(1). F(0) has four main subunits: a(1), b(1), b'(1) and c(10-14). The alpha and beta chains form an alternating ring which encloses part of the gamma chain. F(1) is attached to F(0) by a central stalk formed by the gamma and epsilon chains, while a peripheral stalk is formed by the delta, b and b' chains.

Its subcellular location is the plastid. It localises to the chloroplast thylakoid membrane. The catalysed reaction is ATP + H2O + 4 H(+)(in) = ADP + phosphate + 5 H(+)(out). F(1)F(0) ATP synthase produces ATP from ADP in the presence of a proton or sodium gradient. F-type ATPases consist of two structural domains, F(1) containing the extramembraneous catalytic core and F(0) containing the membrane proton channel, linked together by a central stalk and a peripheral stalk. During catalysis, ATP synthesis in the catalytic domain of F(1) is coupled via a rotary mechanism of the central stalk subunits to proton translocation. In terms of biological role, the alpha chain is a regulatory subunit. In Chlamydomonas reinhardtii (Chlamydomonas smithii), this protein is ATP synthase subunit alpha, chloroplastic.